A 586-amino-acid chain; its full sequence is A-type ATP synthase subunit A (586 aa).

Residue 232–239 coordinates ATP; that stretch reads GPFGSGKT.

Belongs to the ATPase alpha/beta chains family. Has multiple subunits with at least A(3), B(3), C, D, E, F, H, I and proteolipid K(x).

It localises to the cell membrane. It catalyses the reaction ATP + H2O + 4 H(+)(in) = ADP + phosphate + 5 H(+)(out). In terms of biological role, component of the A-type ATP synthase that produces ATP from ADP in the presence of a proton gradient across the membrane. The A chain is the catalytic subunit. The protein is A-type ATP synthase subunit A of Methanococcus vannielii (strain ATCC 35089 / DSM 1224 / JCM 13029 / OCM 148 / SB).